Here is a 430-residue protein sequence, read N- to C-terminus: Endo-beta-1,4-glucanase celB (430 aa).

Residues 1–16 (MALLLSLSLLATTISA) form the signal peptide. Asn-43 and Asn-153 each carry an N-linked (GlcNAc...) asparagine glycan. Glu-216 functions as the Nucleophile in the catalytic mechanism. Catalysis depends on Glu-221, which acts as the Proton donor. Asn-395 is a glycosylation site (N-linked (GlcNAc...) asparagine).

It belongs to the glycosyl hydrolase 7 (cellulase C) family.

The protein localises to the secreted. It catalyses the reaction Endohydrolysis of (1-&gt;4)-beta-D-glucosidic linkages in cellulose, lichenin and cereal beta-D-glucans.. Functionally, has endoglucanase activity on substrates containing beta-1,4 glycosidic bonds, like in carboxymethylcellulose (CMC), hydroxyethylcellulose (HEC) and beta-glucan. Involved in the degradation of complex natural cellulosic substrates. The sequence is that of Endo-beta-1,4-glucanase celB (celB) from Emericella nidulans (strain FGSC A4 / ATCC 38163 / CBS 112.46 / NRRL 194 / M139) (Aspergillus nidulans).